The sequence spans 944 residues: 2-oxoglutarate dehydrogenase E1 component (944 aa).

Residues 914–944 form a disordered region; the sequence is RRRRSSPAEGDPTVHKKEQERIVSDSLTRKN. Basic and acidic residues predominate over residues 925–936; sequence PTVHKKEQERIV.

It belongs to the alpha-ketoglutarate dehydrogenase family. Homodimer. Part of the 2-oxoglutarate dehydrogenase (OGDH) complex composed of E1 (2-oxoglutarate dehydrogenase), E2 (dihydrolipoamide succinyltransferase) and E3 (dihydrolipoamide dehydrogenase); the complex contains multiple copies of the three enzymatic components (E1, E2 and E3). Thiamine diphosphate is required as a cofactor.

The enzyme catalyses N(6)-[(R)-lipoyl]-L-lysyl-[protein] + 2-oxoglutarate + H(+) = N(6)-[(R)-S(8)-succinyldihydrolipoyl]-L-lysyl-[protein] + CO2. In terms of biological role, E1 component of the 2-oxoglutarate dehydrogenase (OGDH) complex which catalyzes the decarboxylation of 2-oxoglutarate, the first step in the conversion of 2-oxoglutarate to succinyl-CoA and CO(2). This chain is 2-oxoglutarate dehydrogenase E1 component, found in Bacillus licheniformis (strain ATCC 14580 / DSM 13 / JCM 2505 / CCUG 7422 / NBRC 12200 / NCIMB 9375 / NCTC 10341 / NRRL NRS-1264 / Gibson 46).